The primary structure comprises 314 residues: tRNA-cytidine(32) 2-sulfurtransferase (314 aa).

The PP-loop motif motif lies at 49–54; sequence SGGKDS. Positions 124, 127, and 215 each coordinate [4Fe-4S] cluster.

The protein belongs to the TtcA family. As to quaternary structure, homodimer. Requires Mg(2+) as cofactor. The cofactor is [4Fe-4S] cluster.

It localises to the cytoplasm. The catalysed reaction is cytidine(32) in tRNA + S-sulfanyl-L-cysteinyl-[cysteine desulfurase] + AH2 + ATP = 2-thiocytidine(32) in tRNA + L-cysteinyl-[cysteine desulfurase] + A + AMP + diphosphate + H(+). It functions in the pathway tRNA modification. Functionally, catalyzes the ATP-dependent 2-thiolation of cytidine in position 32 of tRNA, to form 2-thiocytidine (s(2)C32). The sulfur atoms are provided by the cysteine/cysteine desulfurase (IscS) system. The sequence is that of tRNA-cytidine(32) 2-sulfurtransferase from Pasteurella multocida (strain Pm70).